The sequence spans 105 residues: Cell division topological specificity factor (105 aa).

The protein belongs to the MinE family.

Functionally, prevents the cell division inhibition by proteins MinC and MinD at internal division sites while permitting inhibition at polar sites. This ensures cell division at the proper site by restricting the formation of a division septum at the midpoint of the long axis of the cell. The polypeptide is Cell division topological specificity factor (Prochlorococcus marinus (strain MIT 9515)).